Reading from the N-terminus, the 527-residue chain is MKKLLAMFFCLTVVVNAPLAMAEDAKTTEKTTDVVLIGGGIMSSTLGVYLQELQPDWSIDMVERMDNVAEESSNGWNNAGTGHSAFMELNYTPDNPDGPINISKALEITEAFEVSRQFWSYQVKNGVLNNPHSFINSVPHISFVWGDENTAFLKHRYDAMQHSTLYRGMEFSDDPNTIKEWAPLVMEGRDPAQKIAATRMPIGTDVNYGEITRQLVDAMKTKSNFALHLNSEVRDIKRNADNTWSVTYADLKNGEKESVIKAKFVFIGAGGAALQLLQKTGIPEADLYGGFPVGGEFLVTENPEIVKRHMAKVYGKASVGAPPMSVPHLDTRIFDGKPVLLFGPFATFSSKFLKNGSLWDLIGSVTFSNVMPMTHVGLDNFDLVKYLIGQVMMDDDDRFASLKEYFPNAKKEDWRLTVAGQRVQIIKKDDDKGGVLKLGTEIVSSQDGSIAALLGASPGASTAAPIMLSLLEKVFKDKVATPEWQSKLKEIVPSYGQKLDGNIEMTNKIRSYTSSTLGLDYIEVKPE.

This sequence belongs to the MQO family. FAD serves as cofactor.

It carries out the reaction (S)-malate + a quinone = a quinol + oxaloacetate. It functions in the pathway carbohydrate metabolism; tricarboxylic acid cycle; oxaloacetate from (S)-malate (quinone route): step 1/1. This Pectobacterium carotovorum subsp. carotovorum (strain PC1) protein is Probable malate:quinone oxidoreductase.